The primary structure comprises 326 residues: Isoaspartyl peptidase/L-asparaginase (326 aa).

The Nucleophile role is filled by Thr185. Residues 213-216 (RVGD) and 236-239 (TGHG) each bind substrate.

The protein belongs to the Ntn-hydrolase family. In terms of assembly, heterodimer of an alpha and beta chain produced by autocleavage. This heterodimer may then dimerize in turn, giving rise to a heterotetramer. Cleaved into an alpha and beta chain by autocatalysis; this activates the enzyme. The N-terminal residue of the beta subunit is responsible for the nucleophile hydrolase activity. As to expression, high expression in the heart and brain while low to minimal expression in the other tissues. In ocular tissues, high levels is observed in the optic nerve and retina while relatively low levels of expression are detected in the iris-ciliary body, lens or retinal pigment epithelium.

It localises to the cytoplasm. It carries out the reaction L-asparagine + H2O = L-aspartate + NH4(+). The catalysed reaction is Cleavage of a beta-linked Asp residue from the N-terminus of a polypeptide.. In terms of biological role, has both L-asparaginase and beta-aspartyl peptidase activity. May be involved in the production of L-aspartate, which can act as an excitatory neurotransmitter in some brain regions. Is highly active with L-Asp beta-methyl ester. Besides, has catalytic activity toward beta-aspartyl dipeptides and their methyl esters, including beta-L-Asp-L-Phe, beta-L-Asp-L-Phe methyl ester (aspartame), beta-L-Asp-L-Ala, beta-L-Asp-L-Leu and beta-L-Asp-L-Lys. Does not have aspartylglucosaminidase activity and is inactive toward GlcNAc-L-Asn. Likewise, has no activity toward glutamine. This chain is Isoaspartyl peptidase/L-asparaginase (Asrgl1), found in Mus musculus (Mouse).